The chain runs to 244 residues: Putative ribosomal recycling factor, mitochondrial (244 aa).

It belongs to the RRF family.

The protein localises to the mitochondrion. Its function is as follows. Necessary for protein synthesis in mitochondria. Functions as a ribosome recycling factor in mitochondria. The sequence is that of Putative ribosomal recycling factor, mitochondrial (rrf1) from Schizosaccharomyces pombe (strain 972 / ATCC 24843) (Fission yeast).